A 143-amino-acid polypeptide reads, in one-letter code: Large ribosomal subunit protein uL11 (143 aa).

Belongs to the universal ribosomal protein uL11 family. As to quaternary structure, part of the ribosomal stalk of the 50S ribosomal subunit. Interacts with L10 and the large rRNA to form the base of the stalk. L10 forms an elongated spine to which L12 dimers bind in a sequential fashion forming a multimeric L10(L12)X complex. In terms of processing, one or more lysine residues are methylated.

Functionally, forms part of the ribosomal stalk which helps the ribosome interact with GTP-bound translation factors. The chain is Large ribosomal subunit protein uL11 from Paraburkholderia phymatum (strain DSM 17167 / CIP 108236 / LMG 21445 / STM815) (Burkholderia phymatum).